A 346-amino-acid chain; its full sequence is Methylthioribose-1-phosphate isomerase (346 aa).

Substrate contacts are provided by residues 54 to 56 (RGA), arginine 91, and glutamine 192. Aspartate 233 functions as the Proton donor in the catalytic mechanism. Position 243–244 (243–244 (NK)) interacts with substrate.

The protein belongs to the eIF-2B alpha/beta/delta subunits family. MtnA subfamily.

The enzyme catalyses 5-(methylsulfanyl)-alpha-D-ribose 1-phosphate = 5-(methylsulfanyl)-D-ribulose 1-phosphate. Its pathway is amino-acid biosynthesis; L-methionine biosynthesis via salvage pathway; L-methionine from S-methyl-5-thio-alpha-D-ribose 1-phosphate: step 1/6. Catalyzes the interconversion of methylthioribose-1-phosphate (MTR-1-P) into methylthioribulose-1-phosphate (MTRu-1-P). This is Methylthioribose-1-phosphate isomerase from Yersinia enterocolitica serotype O:8 / biotype 1B (strain NCTC 13174 / 8081).